The following is a 348-amino-acid chain: Phenylalanine--tRNA ligase alpha subunit (348 aa).

Residue glutamate 259 coordinates Mg(2+).

It belongs to the class-II aminoacyl-tRNA synthetase family. Phe-tRNA synthetase alpha subunit type 1 subfamily. Tetramer of two alpha and two beta subunits. Mg(2+) is required as a cofactor.

It is found in the cytoplasm. The enzyme catalyses tRNA(Phe) + L-phenylalanine + ATP = L-phenylalanyl-tRNA(Phe) + AMP + diphosphate + H(+). This chain is Phenylalanine--tRNA ligase alpha subunit, found in Enterococcus faecalis (strain ATCC 700802 / V583).